The primary structure comprises 244 residues: Small ribosomal subunit protein uS3 (244 aa).

The region spanning 39-107 (MRKFVMSELK…ETHLNIVEVR (69 aa)) is the KH type-2 domain. A disordered region spans residues 214–244 (ASERRALEGDAQGPASRERDRGDRRRERDNA). A compositionally biased stretch (basic and acidic residues) spans 229–244 (SRERDRGDRRRERDNA).

This sequence belongs to the universal ribosomal protein uS3 family. In terms of assembly, part of the 30S ribosomal subunit. Forms a tight complex with proteins S10 and S14.

Its function is as follows. Binds the lower part of the 30S subunit head. Binds mRNA in the 70S ribosome, positioning it for translation. This is Small ribosomal subunit protein uS3 from Rhizobium etli (strain CIAT 652).